The chain runs to 116 residues: Ribonuclease P protein component (116 aa).

It belongs to the RnpA family. As to quaternary structure, consists of a catalytic RNA component (M1 or rnpB) and a protein subunit.

It catalyses the reaction Endonucleolytic cleavage of RNA, removing 5'-extranucleotides from tRNA precursor.. In terms of biological role, RNaseP catalyzes the removal of the 5'-leader sequence from pre-tRNA to produce the mature 5'-terminus. It can also cleave other RNA substrates such as 4.5S RNA. The protein component plays an auxiliary but essential role in vivo by binding to the 5'-leader sequence and broadening the substrate specificity of the ribozyme. The chain is Ribonuclease P protein component from Leuconostoc mesenteroides subsp. mesenteroides (strain ATCC 8293 / DSM 20343 / BCRC 11652 / CCM 1803 / JCM 6124 / NCDO 523 / NBRC 100496 / NCIMB 8023 / NCTC 12954 / NRRL B-1118 / 37Y).